Here is an 823-residue protein sequence, read N- to C-terminus: Kinesin-like protein KIN-7N (823 aa).

Residues lysine 3–isoleucine 325 enclose the Kinesin motor domain. Glycine 83–threonine 90 provides a ligand contact to ATP. Coiled coils occupy residues leucine 341–asparagine 414, arginine 527–glutamine 557, and glutamate 696–glutamate 786.

Belongs to the TRAFAC class myosin-kinesin ATPase superfamily. Kinesin family. KIN-7 subfamily.

In Arabidopsis thaliana (Mouse-ear cress), this protein is Kinesin-like protein KIN-7N.